A 339-amino-acid chain; its full sequence is tRNA (cytidine(56)-2'-O)-methyltransferase (339 aa).

S-adenosyl-L-methionine contacts are provided by residues Leu-79 and 105 to 109 (GSEKV). The 108-residue stretch at 188–295 (LIEHVKAVEG…VAQADNLFAG (108 aa)) folds into the HD domain.

Belongs to the aTrm56 family. Homodimer.

Its subcellular location is the cytoplasm. It carries out the reaction cytidine(56) in tRNA + S-adenosyl-L-methionine = 2'-O-methylcytidine(56) in tRNA + S-adenosyl-L-homocysteine + H(+). Functionally, specifically catalyzes the AdoMet-dependent 2'-O-ribose methylation of cytidine at position 56 in tRNAs. In Thermoplasma acidophilum (strain ATCC 25905 / DSM 1728 / JCM 9062 / NBRC 15155 / AMRC-C165), this protein is tRNA (cytidine(56)-2'-O)-methyltransferase.